Here is a 1072-residue protein sequence, read N- to C-terminus: DNA-directed RNA polymerase subunit beta (1072 aa).

This sequence belongs to the RNA polymerase beta chain family. In terms of assembly, in plastids the minimal PEP RNA polymerase catalytic core is composed of four subunits: alpha, beta, beta', and beta''. When a (nuclear-encoded) sigma factor is associated with the core the holoenzyme is formed, which can initiate transcription.

It localises to the plastid. The protein resides in the chloroplast. The catalysed reaction is RNA(n) + a ribonucleoside 5'-triphosphate = RNA(n+1) + diphosphate. Its function is as follows. DNA-dependent RNA polymerase catalyzes the transcription of DNA into RNA using the four ribonucleoside triphosphates as substrates. In Eucalyptus globulus subsp. globulus (Tasmanian blue gum), this protein is DNA-directed RNA polymerase subunit beta.